The sequence spans 960 residues: Gamma-aminobutyric acid type B receptor subunit 1 (960 aa).

An N-terminal signal peptide occupies residues 1-19 (MLLLLLVPLFLRPLGAGGA). Topologically, residues 20–590 (QTPNATSEGC…KTFRFLSQKL (571 aa)) are extracellular. N23 and N83 each carry an N-linked (GlcNAc...) asparagine glycan. 2 consecutive Sushi domains span residues 29–95 (CQII…PSRC) and 97–158 (RICS…HCQV). Cystine bridges form between C99–C144, C130–C156, and C219–C245. 4-aminobutanoate contacts are provided by S246, S269, H286, and Y366. C375 and C409 are disulfide-bonded. N-linked (GlcNAc...) asparagine glycosylation is found at N408 and N439. Residue E465 participates in 4-aminobutanoate binding. 3 N-linked (GlcNAc...) asparagine glycosylation sites follow: N481, N501, and N513. Residues 591-611 (FISVSVLSSLGIVLAVVCLSF) form a helical membrane-spanning segment. At 612–630 (NIYNSHVRYIQNSQPNLNN) the chain is on the cytoplasmic side. The chain crosses the membrane as a helical span at residues 631 to 651 (LTAVGCSLALAAVFPLGLDGY). Residues 652 to 666 (HIGRSQFPFVCQARL) lie on the Extracellular side of the membrane. A helical transmembrane segment spans residues 667–687 (WLLGLGFSLGYGSMFTKIWWV). At 688 to 709 (HTVFTKKEEKKEWRKTLEPWKL) the chain is on the cytoplasmic side. The helical transmembrane segment at 710–730 (YATVGLLVGMDVLTLAIWQIV) threads the bilayer. Residues 731-767 (DPLHRTIETFAKEEPKEDIDVSILPQLEHCSSKKMNT) lie on the Extracellular side of the membrane. Residues 768–788 (WLGIFYGYKGLLLLLGIFLAY) form a helical membrane-spanning segment. Over 789-803 (ETKSVSTEKINDHRA) the chain is Cytoplasmic. A helical membrane pass occupies residues 804–824 (VGMAIYNVAVLCLITAPVTMI). At 825–832 (LSSQQDAA) the chain is on the extracellular side. Residues 833–853 (FAFASLAIVFSSYITLVVLFV) form a helical membrane-spanning segment. Topologically, residues 854 to 960 (PKMRRLITRG…DGSRVHLLYK (107 aa)) are cytoplasmic. The span at 866 to 879 (QSETQDTMKTGSST) shows a compositional bias: polar residues. Disordered stretches follow at residues 866–891 (QSET…RLLE) and 908–960 (VSEL…LLYK). A coiled-coil region spans residues 870–924 (QDTMKTGSSTNNNEEEKSRLLEKENRELEKIIAEKEERVSELRHQLQSRQQLRSR). A Phosphothreonine modification is found at T872. An interaction with ATF4 region spans residues 887–915 (SRLLEKENRELEKIIAEKEERVSELRHQL). T929 carries the post-translational modification Phosphothreonine.

Belongs to the G-protein coupled receptor 3 family. GABA-B receptor subfamily. As to quaternary structure, heterodimer of GABBR1 and GABBR2. Homodimers may form, but are inactive. Interacts (via C-terminus) with ATF4 (via leucine zipper domain). Interacts with JAKMIP1. In terms of tissue distribution, ubiquitously expressed in tissues including the forebrain, cerebellum, eye, atrium, ventricle, lung, stomach, small intestine, colon, liver, spleen, kidney, urinary bladder and skeletal muscle. Expressed at low levels in testis, and more highly in brain regions. Expression is high the brain regions including cerebral cortical layers, with higher expression in VIb than in the II-V layers, pyramidal CA1-CA3 cell layers and granular cell layers of the hippocampus, granular cell layers of the dentate gyrus, including the caudate, putamen, nucleus accumbens and olfactory tubercle, the granular layer cell layers of the medial habenula, in the cerebellum, predominantly in Purkinje cells, and in the granule cell layer. Also expressed in areas of the brain including the medial geniculate nucleus, substantia nigra, pars compacta, the ventral tegmental area, and in several thalamic, amygdaloid and hypothalamic nuclei, such as the arcuate nucleus of the hypothalamus and mammilary bodies of the hypothalamus. Expressed in the amacrine cell of the retina. Expressed in the brain, spinal cord, stomach, testis, adrenal gland, pituitary, spleen and prostate. As to expression, expressed in the brain, spinal cord, stomach, testis, kidney and liver. In terms of tissue distribution, ubiquitously expressed. Expressed in the forebrain, cerebellum, eye, kidney and urinary bladder. As to expression, ubiquitously expressed with high expression in the pyramidal CA1-CA3 cell layers of the hippocampus, the granule cell layers of the dentate gyrus and olfactory tubercle, the whole cortex, and Purkinje cells of the cerebellum. Moderate expression in the granule cell layer of the cerebellum.

The protein resides in the cell membrane. It is found in the postsynaptic cell membrane. Its subcellular location is the cell projection. It localises to the dendrite. The protein localises to the perikaryon. Functionally, component of a heterodimeric G-protein coupled receptor for GABA, formed by GABBR1 and GABBR2. Within the heterodimeric GABA receptor, only GABBR1 seems to bind agonists, while GABBR2 mediates coupling to G proteins. Ligand binding causes a conformation change that triggers signaling via guanine nucleotide-binding proteins (G proteins) and modulates the activity of down-stream effectors, such as adenylate cyclase. Signaling inhibits adenylate cyclase, stimulates phospholipase A2, activates potassium channels, inactivates voltage-dependent calcium-channels and modulates inositol phospholipid hydrolysis. Calcium is required for high affinity binding to GABA. Plays a critical role in the fine-tuning of inhibitory synaptic transmission. Pre-synaptic GABA receptor inhibits neurotransmitter release by down-regulating high-voltage activated calcium channels, whereas postsynaptic GABA receptor decreases neuronal excitability by activating a prominent inwardly rectifying potassium (Kir) conductance that underlies the late inhibitory postsynaptic potentials. Not only implicated in synaptic inhibition but also in hippocampal long-term potentiation, slow wave sleep, muscle relaxation and antinociception. This Rattus norvegicus (Rat) protein is Gamma-aminobutyric acid type B receptor subunit 1 (Gabbr1).